A 171-amino-acid polypeptide reads, in one-letter code: 3-hydroxydecanoyl-[acyl-carrier-protein] dehydratase (171 aa).

Residue His-70 is part of the active site.

This sequence belongs to the thioester dehydratase family. FabA subfamily. Homodimer.

It is found in the cytoplasm. It catalyses the reaction a (3R)-hydroxyacyl-[ACP] = a (2E)-enoyl-[ACP] + H2O. The enzyme catalyses (3R)-hydroxydecanoyl-[ACP] = (2E)-decenoyl-[ACP] + H2O. It carries out the reaction (2E)-decenoyl-[ACP] = (3Z)-decenoyl-[ACP]. It participates in lipid metabolism; fatty acid biosynthesis. Functionally, necessary for the introduction of cis unsaturation into fatty acids. Catalyzes the dehydration of (3R)-3-hydroxydecanoyl-ACP to E-(2)-decenoyl-ACP and then its isomerization to Z-(3)-decenoyl-ACP. Can catalyze the dehydratase reaction for beta-hydroxyacyl-ACPs with saturated chain lengths up to 16:0, being most active on intermediate chain length. This Photobacterium profundum (strain SS9) protein is 3-hydroxydecanoyl-[acyl-carrier-protein] dehydratase.